The primary structure comprises 1118 residues: Phytochrome 1 (1118 aa).

Residues 1-10 (MSSTRHSYSS) show a composition bias toward low complexity. Residues 1-23 (MSSTRHSYSSGGSGKSKHGRRIA) are disordered. One can recognise a GAF domain in the interval 212-391 (DIGLLCDSVV…VFSLQLNMEV (180 aa)). Residue Cys317 coordinates phytochromobilin. PAS domains lie at 606 to 677 (VASE…LEGE) and 740 to 811 (DYKA…TKLM). In terms of domain architecture, Histidine kinase spans 887–1110 (YVKEELKKPL…LVTIQFPLAH (224 aa)).

This sequence belongs to the phytochrome family. Homodimer. In terms of processing, contains one covalently linked phytochromobilin chromophore.

Its function is as follows. Regulatory photoreceptor which exists in two forms that are reversibly interconvertible by light: the Pr form that absorbs maximally in the red region of the spectrum and the Pfr form that absorbs maximally in the far-red region. Photoconversion of Pr to Pfr induces an array of morphogenic responses, whereas reconversion of Pfr to Pr cancels the induction of those responses. Pfr controls the expression of a number of nuclear genes including those encoding the small subunit of ribulose-bisphosphate carboxylase, chlorophyll A/B binding protein, protochlorophyllide reductase, rRNA, etc. It also controls the expression of its own gene(s) in a negative feedback fashion. In Adiantum capillus-veneris (Maidenhair fern), this protein is Phytochrome 1 (PHY1).